A 168-amino-acid chain; its full sequence is Putative flavin-containing monooxygenase FMO GS-OX-like 11 (168 aa).

An FAD-binding site is contributed by 17 to 22 (GAGAAG).

This sequence belongs to the FMO family. FAD serves as cofactor.

Its function is as follows. Catalyzes the conversion of methylthioalkyl glucosinolates of any chain length into methylsulfinylalkyl glucosinolates. The polypeptide is Putative flavin-containing monooxygenase FMO GS-OX-like 11 (Arabidopsis thaliana (Mouse-ear cress)).